A 271-amino-acid polypeptide reads, in one-letter code: Aquaporin-2 (271 aa).

Over 1–11 (MWELRSIAFSR) the chain is Cytoplasmic. The chain crosses the membrane as a helical span at residues 12-32 (AVLAEFLATLLFVFFGLGSAL). Residues 33 to 40 (QWASSPPS) are Extracellular-facing. A helical transmembrane segment spans residues 41-59 (VLQIAVAFGLGIGILVQAL). Residues 60–64 (GHVSG) are Cytoplasmic-facing. Positions 65 to 74 (AHINPAVTVA) form an intramembrane region, discontinuously helical. An NPA 1 motif is present at residues 68-70 (NPA). The Cytoplasmic segment spans residues 75–85 (CLVGCHVSFLR). The helical transmembrane segment at 86 to 107 (AAFYVAAQLLGAVAGAAILHEI) threads the bilayer. At 108 to 127 (TPVEIRGDLAVNALHNNATA) the chain is on the extracellular side. An N-linked (GlcNAc...) asparagine glycan is attached at asparagine 124. A helical transmembrane segment spans residues 128–148 (GQAVTVELFLTMQLVLCIFAS). The Cytoplasmic portion of the chain corresponds to 149–156 (TDERRGDN). Residues 157-176 (LGSPALSIGFSVTLGHLLGI) form a helical membrane-spanning segment. Residues 177–180 (YFTG) lie on the Extracellular side of the membrane. Residues 181–193 (CSMNPARSLAPAV) constitute an intramembrane region (discontinuously helical). The NPA 2 signature appears at 184 to 186 (NPA). At 194-201 (VTGKFDDH) the chain is on the extracellular side. Residues 202 to 222 (WVFWIGPLVGAIIGSLLYNYL) traverse the membrane as a helical segment. Residues 223–271 (LFPSAKSLQERLAVLKGLEPDTDWEEREVRRRQSVELHSPQSLPRGSKA) lie on the Cytoplasmic side of the membrane. The segment at 251–271 (VRRRQSVELHSPQSLPRGSKA) is disordered. Phosphoserine is present on residues serine 256, serine 261, serine 264, and serine 269. Positions 261 to 271 (SPQSLPRGSKA) are enriched in polar residues.

It belongs to the MIP/aquaporin (TC 1.A.8) family. In terms of assembly, homotetramer. Post-translationally, ser-256 phosphorylation is necessary and sufficient for expression at the apical membrane. Endocytosis is not phosphorylation-dependent. In terms of processing, N-glycosylated. Detected in kidney, in cortical and the medullary collecting tubules (at protein level). Detected in kidney medulla and cortex.

It localises to the apical cell membrane. It is found in the basolateral cell membrane. The protein localises to the cell membrane. The protein resides in the cytoplasmic vesicle membrane. Its subcellular location is the golgi apparatus. It localises to the trans-Golgi network membrane. It carries out the reaction H2O(in) = H2O(out). It catalyses the reaction glycerol(in) = glycerol(out). Forms a water-specific channel that provides the plasma membranes of renal collecting duct with high permeability to water, thereby permitting water to move in the direction of an osmotic gradient. Plays an essential role in renal water homeostasis. Could also be permeable to glycerol. The sequence is that of Aquaporin-2 from Rattus norvegicus (Rat).